The chain runs to 305 residues: Methionyl-tRNA formyltransferase (305 aa).

Residue 111–114 (SLLP) coordinates (6S)-5,6,7,8-tetrahydrofolate.

Belongs to the Fmt family.

The catalysed reaction is L-methionyl-tRNA(fMet) + (6R)-10-formyltetrahydrofolate = N-formyl-L-methionyl-tRNA(fMet) + (6S)-5,6,7,8-tetrahydrofolate + H(+). In terms of biological role, attaches a formyl group to the free amino group of methionyl-tRNA(fMet). The formyl group appears to play a dual role in the initiator identity of N-formylmethionyl-tRNA by promoting its recognition by IF2 and preventing the misappropriation of this tRNA by the elongation apparatus. This is Methionyl-tRNA formyltransferase from Campylobacter jejuni subsp. jejuni serotype O:6 (strain 81116 / NCTC 11828).